The primary structure comprises 254 residues: tRNA (guanine-N(1)-)-methyltransferase (254 aa).

S-adenosyl-L-methionine contacts are provided by residues glycine 112 and isoleucine 131 to leucine 136.

The protein belongs to the RNA methyltransferase TrmD family. As to quaternary structure, homodimer.

It is found in the cytoplasm. The catalysed reaction is guanosine(37) in tRNA + S-adenosyl-L-methionine = N(1)-methylguanosine(37) in tRNA + S-adenosyl-L-homocysteine + H(+). In terms of biological role, specifically methylates guanosine-37 in various tRNAs. The chain is tRNA (guanine-N(1)-)-methyltransferase from Persephonella marina (strain DSM 14350 / EX-H1).